Consider the following 98-residue polypeptide: Aspartyl/glutamyl-tRNA(Asn/Gln) amidotransferase subunit C (98 aa).

The protein belongs to the GatC family. In terms of assembly, heterotrimer of A, B and C subunits.

The catalysed reaction is L-glutamyl-tRNA(Gln) + L-glutamine + ATP + H2O = L-glutaminyl-tRNA(Gln) + L-glutamate + ADP + phosphate + H(+). The enzyme catalyses L-aspartyl-tRNA(Asn) + L-glutamine + ATP + H2O = L-asparaginyl-tRNA(Asn) + L-glutamate + ADP + phosphate + 2 H(+). Its function is as follows. Allows the formation of correctly charged Asn-tRNA(Asn) or Gln-tRNA(Gln) through the transamidation of misacylated Asp-tRNA(Asn) or Glu-tRNA(Gln) in organisms which lack either or both of asparaginyl-tRNA or glutaminyl-tRNA synthetases. The reaction takes place in the presence of glutamine and ATP through an activated phospho-Asp-tRNA(Asn) or phospho-Glu-tRNA(Gln). The chain is Aspartyl/glutamyl-tRNA(Asn/Gln) amidotransferase subunit C from Acidothermus cellulolyticus (strain ATCC 43068 / DSM 8971 / 11B).